Here is a 312-residue protein sequence, read N- to C-terminus: Pantothenate kinase (312 aa).

97 to 104 (GSVAVGKS) serves as a coordination point for ATP.

The protein belongs to the prokaryotic pantothenate kinase family.

It localises to the cytoplasm. The catalysed reaction is (R)-pantothenate + ATP = (R)-4'-phosphopantothenate + ADP + H(+). It functions in the pathway cofactor biosynthesis; coenzyme A biosynthesis; CoA from (R)-pantothenate: step 1/5. This Mycobacterium leprae (strain TN) protein is Pantothenate kinase (coaA).